The primary structure comprises 470 residues: Uronate isomerase (470 aa).

Belongs to the metallo-dependent hydrolases superfamily. Uronate isomerase family.

The enzyme catalyses D-glucuronate = D-fructuronate. It catalyses the reaction aldehydo-D-galacturonate = keto-D-tagaturonate. It participates in carbohydrate metabolism; pentose and glucuronate interconversion. This Escherichia coli O8 (strain IAI1) protein is Uronate isomerase.